Here is a 436-residue protein sequence, read N- to C-terminus: 3-ketoacyl-CoA thiolase (436 aa).

C99 acts as the Acyl-thioester intermediate in catalysis. Catalysis depends on proton acceptor residues H392 and C422.

The protein belongs to the thiolase-like superfamily. Thiolase family. In terms of assembly, heterotetramer of two alpha chains (FadJ) and two beta chains (FadI).

It is found in the cytoplasm. It catalyses the reaction an acyl-CoA + acetyl-CoA = a 3-oxoacyl-CoA + CoA. Its pathway is lipid metabolism; fatty acid beta-oxidation. Functionally, catalyzes the final step of fatty acid oxidation in which acetyl-CoA is released and the CoA ester of a fatty acid two carbons shorter is formed. The sequence is that of 3-ketoacyl-CoA thiolase from Escherichia coli O127:H6 (strain E2348/69 / EPEC).